The following is a 754-amino-acid chain: 1,4-alpha-glucan branching enzyme GlgB (754 aa).

The active-site Nucleophile is the D431. The Proton donor role is filled by E484.

The protein belongs to the glycosyl hydrolase 13 family. GlgB subfamily. In terms of assembly, monomer.

The enzyme catalyses Transfers a segment of a (1-&gt;4)-alpha-D-glucan chain to a primary hydroxy group in a similar glucan chain.. The protein operates within glycan biosynthesis; glycogen biosynthesis. Functionally, catalyzes the formation of the alpha-1,6-glucosidic linkages in glycogen by scission of a 1,4-alpha-linked oligosaccharide from growing alpha-1,4-glucan chains and the subsequent attachment of the oligosaccharide to the alpha-1,6 position. This Prochlorococcus marinus (strain MIT 9215) protein is 1,4-alpha-glucan branching enzyme GlgB.